Here is a 74-residue protein sequence, read N- to C-terminus: Mucroporin (74 aa).

The signal sequence occupies residues 1-22 (MKVKFLLAVFLIVLVVTDHCHA). A Lysine amide modification is found at K39. Residues 45–74 (QMEARFEPQNRNYRKRELDLEKLFANMPDY) constitute a propeptide that is removed on maturation.

It belongs to the non-disulfide-bridged peptide (NDBP) superfamily. Short antimicrobial peptide (group 4) family. In terms of tissue distribution, expressed by the venom gland.

The protein localises to the secreted. It is found in the target cell membrane. Its function is as follows. Mucroporin: cationic host defense peptide that have antibacterial activity by breaking membranes. Is more effective on Gram-positive than on Gram-negative bacteria. Minimum inhibitory concentrations (MIC) are the following: MIC=&gt;100 ug/ml against E.coli AB94012, MIC=&gt;100 ug/ml against P.aeruginosa AB93066, MIC=25 ug/ml against B.thuringiensis AB92037, MIC=50 ug/ml against B.subtilis AB91021, MIC=25 ug/ml against S.aureus AB94004, and MIC=25 ug/ml against the methicillin-resistant coagulase-negative Staphylococcus. Its synthetic analog mucroporin-M1 is more effective. Does not show antiviral activity against any of measles, SARS-CoV, influenza H5N1, hepatitis B and HIV-1 viruses. Functionally, mutant mucroporin-M1: can inhibit Gram-positive bacteria at low concentrations and antibiotic-resistant pathogens. Minimum inhibitory concentrations (MIC) are the following: MIC=12.5 ug/ml against E.coli AB94012, MIC=100 ug/ml against P.aeruginosa AB93066, MIC=25 ug/ml against B.thuringiensis AB92037, MIC=25 ug/ml against B.subtilis AB91021, MIC=5 ug/ml against S.aureus AB94004, and MIC=5 ug/ml against the methicillin-resistant coagulase-negative Staphylococcus. Also shows antiviral activities against measles (EC(50) of 7.15 ug/ml), SARS-CoV (EC(50) of 14.46 ug/ml), influenza H5N1 viruses (EC(50) of 2.10 mug/ml), HIV-1, and hepatitis B virus. The protein is Mucroporin of Lychas mucronatus (Chinese swimming scorpion).